Reading from the N-terminus, the 37-residue chain is Islet amyloid polypeptide (37 aa).

Cys2 and Cys7 form a disulfide bridge. Tyr37 is subject to Tyrosine amide.

The protein belongs to the calcitonin family. In terms of assembly, can form homodimers. Interacts with IDE and INS. Interaction with INS inhibits homodimerization and fibril formation.

Its subcellular location is the secreted. Its function is as follows. Amylin/IAPP is a glucoregulatory peptide hormone that plays an important role in the regulation of energy homeostasis. Selectively inhibits insulin-stimulated glucose utilization and glycogen deposition in muscle, while not affecting adipocyte glucose metabolism. IAPP function is mediated by the CALCR-RAMPs (AMYRs) receptor complexes. Amylin can also bind CALCR receptor in the absence of RAMPs, although it is more selective for AMYRs. In Cricetulus griseus (Chinese hamster), this protein is Islet amyloid polypeptide (IAPP).